Here is a 116-residue protein sequence, read N- to C-terminus: UPF0102 protein ELI_05985 (116 aa).

It belongs to the UPF0102 family.

This is UPF0102 protein ELI_05985 from Erythrobacter litoralis (strain HTCC2594).